A 235-amino-acid polypeptide reads, in one-letter code: 7-cyano-7-deazaguanine synthase (235 aa).

13–23 (FSGGLDSTTCL) provides a ligand contact to ATP. Positions 197, 207, 210, and 213 each coordinate Zn(2+).

This sequence belongs to the QueC family. The cofactor is Zn(2+).

It carries out the reaction 7-carboxy-7-deazaguanine + NH4(+) + ATP = 7-cyano-7-deazaguanine + ADP + phosphate + H2O + H(+). Its pathway is purine metabolism; 7-cyano-7-deazaguanine biosynthesis. Functionally, catalyzes the ATP-dependent conversion of 7-carboxy-7-deazaguanine (CDG) to 7-cyano-7-deazaguanine (preQ(0)). This chain is 7-cyano-7-deazaguanine synthase, found in Solidesulfovibrio magneticus (strain ATCC 700980 / DSM 13731 / RS-1) (Desulfovibrio magneticus).